The primary structure comprises 85 residues: Probable weak neurotoxin 3FTx-Lio1 (85 aa).

An N-terminal signal peptide occupies residues M1–T18. Intrachain disulfides connect C21/C42, C24/C29, C35/C60, C64/C75, and C76/C81.

Belongs to the three-finger toxin family. Ancestral subfamily. In terms of tissue distribution, expressed by the venom gland.

The protein localises to the secreted. This Erythrolamprus poecilogyrus (Water snake) protein is Probable weak neurotoxin 3FTx-Lio1.